The following is a 374-amino-acid chain: Dual-specificity RNA methyltransferase RlmN (374 aa).

Glu-94 serves as the catalytic Proton acceptor. In terms of domain architecture, Radical SAM core spans 100–339 (EEDRATLCVS…VTIRKTRGDD (240 aa)). Cys-107 and Cys-344 are oxidised to a cystine. 3 residues coordinate [4Fe-4S] cluster: Cys-114, Cys-118, and Cys-121. S-adenosyl-L-methionine contacts are provided by residues 168–169 (GE), Ser-200, 222–224 (SLH), and Asn-301. The active-site S-methylcysteine intermediate is the Cys-344.

The protein belongs to the radical SAM superfamily. RlmN family. It depends on [4Fe-4S] cluster as a cofactor.

Its subcellular location is the cytoplasm. It catalyses the reaction adenosine(2503) in 23S rRNA + 2 reduced [2Fe-2S]-[ferredoxin] + 2 S-adenosyl-L-methionine = 2-methyladenosine(2503) in 23S rRNA + 5'-deoxyadenosine + L-methionine + 2 oxidized [2Fe-2S]-[ferredoxin] + S-adenosyl-L-homocysteine. The catalysed reaction is adenosine(37) in tRNA + 2 reduced [2Fe-2S]-[ferredoxin] + 2 S-adenosyl-L-methionine = 2-methyladenosine(37) in tRNA + 5'-deoxyadenosine + L-methionine + 2 oxidized [2Fe-2S]-[ferredoxin] + S-adenosyl-L-homocysteine. In terms of biological role, specifically methylates position 2 of adenine 2503 in 23S rRNA and position 2 of adenine 37 in tRNAs. m2A2503 modification seems to play a crucial role in the proofreading step occurring at the peptidyl transferase center and thus would serve to optimize ribosomal fidelity. The polypeptide is Dual-specificity RNA methyltransferase RlmN (Vibrio vulnificus (strain YJ016)).